The primary structure comprises 501 residues: Beta-secretase 1 (501 aa).

The signal sequence occupies residues 1–21 (MAPALRWLLLWVGSGMLPAQG). The propeptide occupies 22–45 (THLGIRLPLRSGLAGPPLGLRLPR). The Extracellular segment spans residues 22–457 (THLGIRLPLR…PQTDESTLMT (436 aa)). The Peptidase A1 domain maps to 75–416 (YYVEMTVGSP…DRARKRIGFA (342 aa)). Aspartate 93 is a catalytic residue. The residue at position 126 (lysine 126) is an N6-acetyllysine. 3 N-linked (GlcNAc...) asparagine glycosylation sites follow: asparagine 153, asparagine 172, and asparagine 223. Intrachain disulfides connect cysteine 216–cysteine 420, cysteine 278–cysteine 443, and cysteine 330–cysteine 380. Residues lysine 275, lysine 279, and lysine 285 each carry the N6-acetyllysine modification. Aspartate 289 is an active-site residue. An N6-acetyllysine mark is found at lysine 299, lysine 300, and lysine 307. Asparagine 354 carries N-linked (GlcNAc...) asparagine glycosylation. A helical transmembrane segment spans residues 458 to 478 (IAYVMAAICALFMLPLCLMVC). S-palmitoyl cysteine attachment occurs at residues cysteine 474, cysteine 478, cysteine 482, and cysteine 485. The Cytoplasmic portion of the chain corresponds to 479–501 (QWRCLRCLRHQHDDFADDISLLK). An interaction with RTN3 region spans residues 479–501 (QWRCLRCLRHQHDDFADDISLLK). The DXXLL signature appears at 496 to 500 (DISLL). A Phosphoserine modification is found at serine 498. Lysine 501 participates in a covalent cross-link: Glycyl lysine isopeptide (Lys-Gly) (interchain with G-Cter in ubiquitin).

It belongs to the peptidase A1 family. As to quaternary structure, monomer. Interacts (via DXXLL motif) with GGA1, GGA2 and GGA3 (via their VHS domain); the interaction highly increases when BACE1 is phosphorylated at Ser-498. Interacts with RTN1; RTN2; RTN3 and RTN4; the interaction leads to inhibition of amyloid precursor protein processing. Interacts with SNX6. Interacts with PCSK9. Interacts with NAT8 and NAT8B. Interacts with BIN1. Interacts (via extracellular domain) with ADAM10 (via extracellular domain). Interacts with SORL1; this interaction may affect binding with APP and hence reduce APP cleavage. Interacts with NRDC AND NRG1. In terms of processing, palmitoylation mediates lipid raft localization. Acetylated in the endoplasmic reticulum at Lys-126, Lys-275, Lys-279, Lys-285, Lys-299, Lys-300 and Lys-307. Acetylation by NAT8 and NAT8B is transient and deacetylation probably occurs in the Golgi. Acetylation regulates the maturation, the transport to the plasma membrane, the stability and the expression of the protein. Post-translationally, ubiquitinated at Lys-501, ubiquitination leads to lysosomal degradation. Monoubiquitinated and 'Lys-63'-linked polyubitinated. Deubiquitnated by USP8; inhibits lysosomal degradation. In terms of processing, phosphorylation at Ser-498 is required for interaction with GGA1 and retrograded transport from endosomal compartments to the trans-Golgi network. Non-phosphorylated BACE1 enters a direct recycling route to the cell surface. N-Glycosylated. Addition of a bisecting N-acetylglucosamine by MGAT3 blocks lysosomal targeting, further degradation and is required for maintaining stability under stress conditions.

The protein resides in the cell membrane. Its subcellular location is the golgi apparatus. It is found in the trans-Golgi network. The protein localises to the endoplasmic reticulum. It localises to the endosome. The protein resides in the cell surface. Its subcellular location is the cytoplasmic vesicle membrane. It is found in the membrane raft. The protein localises to the lysosome. It localises to the late endosome. The protein resides in the early endosome. Its subcellular location is the recycling endosome. It is found in the cell projection. The protein localises to the axon. It localises to the dendrite. It carries out the reaction Broad endopeptidase specificity. Cleaves Glu-Val-Asn-Leu-|-Asp-Ala-Glu-Phe in the Swedish variant of Alzheimer's amyloid precursor protein.. With respect to regulation, inhibited by RTN3 and RTN4. Responsible for the proteolytic processing of the amyloid precursor protein (APP). Cleaves at the N-terminus of the A-beta peptide sequence, between residues 671 and 672 of APP, leads to the generation and extracellular release of beta-cleaved soluble APP, and a corresponding cell-associated C-terminal fragment which is later released by gamma-secretase. Cleaves CHL1. The sequence is that of Beta-secretase 1 (Bace1) from Rattus norvegicus (Rat).